A 279-amino-acid polypeptide reads, in one-letter code: Undecaprenyl-diphosphatase (279 aa).

The next 6 membrane-spanning stretches (helical) occupy residues 45 to 65 (FVEM…IVIY), 85 to 105 (WQLW…ALPF), 113 to 133 (FNFM…FIWV), 188 to 208 (SVAA…YSGL), 226 to 246 (LILL…IRFL), and 255 to 275 (FTIF…YWLV).

Belongs to the UppP family.

The protein resides in the cell membrane. It carries out the reaction di-trans,octa-cis-undecaprenyl diphosphate + H2O = di-trans,octa-cis-undecaprenyl phosphate + phosphate + H(+). Functionally, catalyzes the dephosphorylation of undecaprenyl diphosphate (UPP). Confers resistance to bacitracin. This Streptococcus agalactiae serotype III (strain NEM316) protein is Undecaprenyl-diphosphatase.